The following is a 479-amino-acid chain: (R)-1-hydroxy-2-aminoethylphosphonate ammonia-lyase (479 aa).

Lys317 is modified (N6-(pyridoxal phosphate)lysine).

This sequence belongs to the class-III pyridoxal-phosphate-dependent aminotransferase family. It depends on pyridoxal 5'-phosphate as a cofactor.

The enzyme catalyses (1R)-(2-amino-1-hydroxyethyl)phosphonate = phosphonoacetaldehyde + NH4(+). Functionally, involved in phosphonate degradation. Functions as a lyase that catalyzes an elimination reaction on the naturally occurring compound (R)-1-hydroxy-2-aminoethylphosphonate ((R)-HAEP), releasing ammonia and generating phosphonoacetaldehyde (PAA), which can be then hydrolyzed by PhnX, encoded by an adjacent gene. Thus, catalyzes a reaction that serves to funnel (R)-HAEP into the hydrolytic pathway for aminoethylphosphonate (AEP, the most common biogenic phosphonate) degradation, expanding the scope and the usefulness of the pathway itself. Is not active toward the (S) enantiomer of HAEP or other HAEP-related compounds such as ethanolamine and D,L-isoserine, indicating a very high substrate specificity. The protein is (R)-1-hydroxy-2-aminoethylphosphonate ammonia-lyase of Vibrio splendidus (strain 12B01).